Reading from the N-terminus, the 363-residue chain is Phosphoserine aminotransferase (363 aa).

Arginine 42 lines the L-glutamate pocket. Residues 76 to 77 (GR), tryptophan 102, threonine 156, aspartate 175, and glutamine 198 contribute to the pyridoxal 5'-phosphate site. Lysine 199 is modified (N6-(pyridoxal phosphate)lysine). 240-241 (NT) contacts pyridoxal 5'-phosphate.

Belongs to the class-V pyridoxal-phosphate-dependent aminotransferase family. SerC subfamily. As to quaternary structure, homodimer. Pyridoxal 5'-phosphate is required as a cofactor.

The protein localises to the cytoplasm. It catalyses the reaction O-phospho-L-serine + 2-oxoglutarate = 3-phosphooxypyruvate + L-glutamate. It carries out the reaction 4-(phosphooxy)-L-threonine + 2-oxoglutarate = (R)-3-hydroxy-2-oxo-4-phosphooxybutanoate + L-glutamate. It participates in amino-acid biosynthesis; L-serine biosynthesis; L-serine from 3-phospho-D-glycerate: step 2/3. Its pathway is cofactor biosynthesis; pyridoxine 5'-phosphate biosynthesis; pyridoxine 5'-phosphate from D-erythrose 4-phosphate: step 3/5. Catalyzes the reversible conversion of 3-phosphohydroxypyruvate to phosphoserine and of 3-hydroxy-2-oxo-4-phosphonooxybutanoate to phosphohydroxythreonine. This Shewanella frigidimarina (strain NCIMB 400) protein is Phosphoserine aminotransferase.